The following is a 347-amino-acid chain: MKKDLDEIDTDIVTLSSFILQEQRRYNQKHKNEEGKPCIIQEASGELSLLLNSLQFSFKFIANTIRKAELVNLIGLSGIVNSTGDEQKKLDKICNDIFITAMKSNGCCKLIVSEEEEDLIVVDSNGSYAVTCDPIDGSSNIDAGVSVGTIFGIYKLRPGSQGDISDVLRPGKEMVAAGYTMYGASAHLLLTTGHRVNGFTLDTDIGEFILTHRNMKMPLQHSIYSINEGYTAFWDEKIARFIAHLKESTPDKKPYSARYIGSMVADMHRTILYGGLFAYPCSKGNNGKLRLLYECFPMAFLVEQAGGIAVNDKGDRILDLVPKTLHGKSSIWLGSKHEVEEYINFIK.

Residues I19–Q23 and S44–S48 each bind AMP. D85 and E114 together coordinate Mg(2+). S127–Y128 contributes to the AMP binding site. Residues D133, I135, and D136 each coordinate Mg(2+). Residue D136–S139 participates in substrate binding. An AMP-binding site is contributed by K155. Substrate contacts are provided by residues N227–Y230, R258–M263, Y279, and K288–R290. A Mg(2+)-binding site is contributed by E294.

The protein belongs to the FBPase class 1 family. Homotetramer. Requires Mg(2+) as cofactor.

It carries out the reaction beta-D-fructose 1,6-bisphosphate + H2O = beta-D-fructose 6-phosphate + phosphate. It participates in carbohydrate biosynthesis; gluconeogenesis. Subject to complex allosteric regulation. The enzyme can assume an active R-state, or an inactive T-state. Intermediate conformations may exist. AMP acts as allosteric inhibitor. AMP binding affects the turnover of bound substrate and not the affinity for substrate. This chain is Fructose-1,6-bisphosphatase (fbp1), found in Schizosaccharomyces pombe (strain 972 / ATCC 24843) (Fission yeast).